Reading from the N-terminus, the 254-residue chain is MARRRQLYEGKAKILFEGPEPGTLVQYFKDDATAGNGAKKGIITGKGVLNNRISEHLMLRLHDIGIPTHFIRRLNMREQLIREVEIIPLEVVVRNVAAGSLAKRLGIPEGTRLPRTIIEYYYKNDSLNDPMVSEEHITAFGWACTHDLDDMVALTMRTNDFLSGLFVGIGITLVDFKLEFGRLWEGEDMRIVLADEISPDNCRLWDAKTSEKLDKDRFRRDMGRVEEAYQEVAWRLGILPEATNSDMKGPEVMQ.

It belongs to the SAICAR synthetase family.

The catalysed reaction is 5-amino-1-(5-phospho-D-ribosyl)imidazole-4-carboxylate + L-aspartate + ATP = (2S)-2-[5-amino-1-(5-phospho-beta-D-ribosyl)imidazole-4-carboxamido]succinate + ADP + phosphate + 2 H(+). It participates in purine metabolism; IMP biosynthesis via de novo pathway; 5-amino-1-(5-phospho-D-ribosyl)imidazole-4-carboxamide from 5-amino-1-(5-phospho-D-ribosyl)imidazole-4-carboxylate: step 1/2. This is Phosphoribosylaminoimidazole-succinocarboxamide synthase from Gluconacetobacter diazotrophicus (strain ATCC 49037 / DSM 5601 / CCUG 37298 / CIP 103539 / LMG 7603 / PAl5).